The chain runs to 96 residues: Uteroglobin (96 aa).

An N-terminal signal peptide occupies residues M1–A19.

It belongs to the secretoglobin family. Antiparallel homodimer; disulfide-linked. Interaction with LMBR1L is controversial. As to expression, club cells (nonciliated cells of the surface epithelium of the pulmonary airways).

The protein resides in the secreted. Binds phosphatidylcholine, phosphatidylinositol, polychlorinated biphenyls (PCB) and weakly progesterone, potent inhibitor of phospholipase A2. In Rattus norvegicus (Rat), this protein is Uteroglobin (Scgb1a1).